Consider the following 402-residue polypeptide: Argininosuccinate synthase (402 aa).

9 to 17 is a binding site for ATP; it reads AYSGGLDTS. Position 86 (Y86) interacts with L-citrulline. Residue G116 participates in ATP binding. L-aspartate-binding residues include T118, N122, and D123. Residue N122 coordinates L-citrulline. L-citrulline contacts are provided by R126, S174, S183, E259, and Y271.

The protein belongs to the argininosuccinate synthase family. Type 1 subfamily. Homotetramer.

Its subcellular location is the cytoplasm. The enzyme catalyses L-citrulline + L-aspartate + ATP = 2-(N(omega)-L-arginino)succinate + AMP + diphosphate + H(+). Its pathway is amino-acid biosynthesis; L-arginine biosynthesis; L-arginine from L-ornithine and carbamoyl phosphate: step 2/3. This is Argininosuccinate synthase from Geobacillus sp. (strain WCH70).